Here is a 395-residue protein sequence, read N- to C-terminus: Formate-dependent phosphoribosylglycinamide formyltransferase (395 aa).

N(1)-(5-phospho-beta-D-ribosyl)glycinamide contacts are provided by residues 22 to 23 (EL) and glutamate 82. Residues arginine 115, lysine 156, 161–166 (SSGKGQ), 196–199 (EGFI), and glutamate 204 contribute to the ATP site. An ATP-grasp domain is found at 120–309 (RLAAETLGLP…EFALHARAIL (190 aa)). Mg(2+)-binding residues include glutamate 268 and glutamate 280. N(1)-(5-phospho-beta-D-ribosyl)glycinamide is bound by residues aspartate 287, lysine 356, and 363–364 (RR).

Belongs to the PurK/PurT family. Homodimer.

The catalysed reaction is N(1)-(5-phospho-beta-D-ribosyl)glycinamide + formate + ATP = N(2)-formyl-N(1)-(5-phospho-beta-D-ribosyl)glycinamide + ADP + phosphate + H(+). It functions in the pathway purine metabolism; IMP biosynthesis via de novo pathway; N(2)-formyl-N(1)-(5-phospho-D-ribosyl)glycinamide from N(1)-(5-phospho-D-ribosyl)glycinamide (formate route): step 1/1. Functionally, involved in the de novo purine biosynthesis. Catalyzes the transfer of formate to 5-phospho-ribosyl-glycinamide (GAR), producing 5-phospho-ribosyl-N-formylglycinamide (FGAR). Formate is provided by PurU via hydrolysis of 10-formyl-tetrahydrofolate. The polypeptide is Formate-dependent phosphoribosylglycinamide formyltransferase (Stenotrophomonas maltophilia (strain K279a)).